A 267-amino-acid polypeptide reads, in one-letter code: MKYKFSHNFISYNLFLFVFMSLILLPYSHASSMGFNTSQHKFSVRTGETRIIYPLSSVKGVSLSVTNPQDYPILVQTQVKGEDKHSPAPFMATPPLFRLDAGMRGRVRVTRTGGNFPEDRESLQWLCITGVPPKEGDVWDNSQHDKKNNMQDVNLNILLSVGTCMKLLVRPDQLRQKPEEMAGKLIWHRNGQQLQVNNPTPFYMNFKSVSLGNKNIKLSSAGNENYVAPFAERSFSLPVDMAERPAEINWQIINDLGSESQVFKANI.

Residues 1 to 34 (MKYKFSHNFISYNLFLFVFMSLILLPYSHASSMG) form the signal peptide. Cys127 and Cys164 form a disulfide bridge.

This sequence belongs to the periplasmic pilus chaperone family.

It localises to the periplasm. Required for the biogenesis of the MyfA fimbria. This chain is Chaperone protein MyfB (myfB), found in Yersinia enterocolitica.